The chain runs to 644 residues: Macrolide export ATP-binding/permease protein MacB (644 aa).

Over 1–268 (MNIIEIKQLN…SAIVAHKMRS (268 aa)) the chain is Cytoplasmic. Residues 4–242 (IEIKQLNRYF…VKNPSVFKGR (239 aa)) form the ABC transporter domain. 40–47 (GQSGSGKS) lines the ATP pocket. A helical transmembrane segment spans residues 269–289 (LLTMLGIIIGITSVVSVVALG). Topologically, residues 290–523 (NGSQQKILEN…TGTMKLLISS (234 aa)) are periplasmic. Residues 524–544 (IAFISLIVGGIGVMNIMLVSV) form a helical membrane-spanning segment. At 545 to 573 (TERTKEIGVRMAIGARQINILQQFLIEAV) the chain is on the cytoplasmic side. A helical transmembrane segment spans residues 574–594 (LICLIGGVAGILLSVLIGVLF). Topologically, residues 595–607 (NSFITDFSMDFST) are periplasmic. A helical transmembrane segment spans residues 608-628 (ASIVTAVLFSTLIGVLFGYMP). At 629–644 (AKKAAELNPITALAQE) the chain is on the cytoplasmic side.

This sequence belongs to the ABC transporter superfamily. Macrolide exporter (TC 3.A.1.122) family. In terms of assembly, homodimer. Part of the tripartite efflux system MacAB-TdeA, which is composed of an inner membrane transporter, MacB, a periplasmic membrane fusion protein, MacA, and an outer membrane component, TdeA. The complex forms a large protein conduit and can translocate molecules across both the inner and outer membranes. Interacts with MacA.

Its subcellular location is the cell inner membrane. Part of the tripartite efflux system MacAB-TdeA. MacB is a non-canonical ABC transporter that contains transmembrane domains (TMD), which form a pore in the inner membrane, and an ATP-binding domain (NBD), which is responsible for energy generation. Confers resistance against macrolides. This chain is Macrolide export ATP-binding/permease protein MacB, found in Aggregatibacter actinomycetemcomitans (Actinobacillus actinomycetemcomitans).